The chain runs to 66 residues: Beta-mammal toxin Co3 (66 aa).

An LCN-type CS-alpha/beta domain is found at 1-66 (KEGYIVNYYD…VWPLPNKTCN (66 aa)). 4 cysteine pairs are disulfide-bonded: Cys12–Cys65, Cys16–Cys41, Cys25–Cys46, and Cys29–Cys48.

Expressed by the venom gland.

The protein localises to the secreted. Its function is as follows. Beta toxins bind voltage-independently at site-4 of sodium channels (Nav) and shift the voltage of activation toward more negative potentials thereby affecting sodium channel activation and promoting spontaneous and repetitive firing. This toxin acts on human Nav1.2/SCN2A, Nav1.4/SCN4A and Nav1.6/SCN8A voltage-gated sodium channels. Also, it reduces the peak of sodium currents in Nav1.5/SCN5A at all potentials. In vivo, is lethal to mice when intraperitoneally injected at a dose of 5ug. No activity is observed when injected into crickets or woodlice. The chain is Beta-mammal toxin Co3 from Centruroides ornatus (Scorpion).